Here is a 509-residue protein sequence, read N- to C-terminus: Transcription factor SOX-9 (509 aa).

Disordered stretches follow at residues 1 to 67 (MNLL…SEED) and 160 to 273 (RLRV…FRDV). Residues 30 to 41 (SAGSPCPSGSGS) are compositionally biased toward low complexity. Over residues 42–52 (DTENTRPQENT) the composition is skewed to polar residues. 2 stretches are compositionally biased toward basic and acidic residues: residues 56 to 67 (GEPDLKKESEED) and 160 to 174 (RLRV…DYKY). The tract at residues 63–103 (ESEEDKFPVCIREAVSQVLKGYDWTLVPMPVRVNGSSKNKP) is dimerization (DIM). The segment at 63–103 (ESEEDKFPVCIREAVSQVLKGYDWTLVPMPVRVNGSSKNKP) is PQA. Serine 64 carries the phosphoserine modification. Residues 105-173 (VKRPMNAFMV…QHKKDHPDYK (69 aa)) constitute a DNA-binding region (HMG box). Phosphoserine is present on serine 211. Positions 224–307 (PGEHSGQSQG…LPPNGHPGVP (84 aa)) are transactivation domain (TAM). 2 consecutive short sequence motifs (9aaTAD) follow at residues 275–284 (IGELSSDVIS) and 290–298 (DVNEFDQYL). A disordered region spans residues 334-415 (VWMSKQQAPP…HYSEQQQHSP (82 aa)). Over residues 341-376 (APPPPPQQPPQAPPAPQAPPQPQAAPPQQPAAPPQQ) the composition is skewed to pro residues. Polar residues predominate over residues 380–415 (HTLTTLSSEPGQSQRTHIKTEQLSPSHYSEQQQHSP). The interval 394–509 (RTHIKTEQLS…QPVYTQLTRP (116 aa)) is transactivation domain (TAC). Lysine 398 is covalently cross-linked (Glycyl lysine isopeptide (Lys-Gly) (interchain with G-Cter in ubiquitin)). The 9aaTAD 3 motif lies at 460–468 (TGLYSTFTY). The interval 479–509 (PIADTSGVPSIPQTHSPQHWEQPVYTQLTRP) is disordered. Residues 485 to 509 (GVPSIPQTHSPQHWEQPVYTQLTRP) are compositionally biased toward polar residues.

In terms of assembly, homodimer; homodimerization is required for activity. Interacts (via C-terminus) with ZNF219; forming a complex that binds to the COL2A1 promoter and activates COL2A1 expression. Interacts with DDRGK1. Interacts with EP300/p300. Interacts with beta-catenin (CTNNB1); inhibiting CTNNB1 activity by competing with the binding sites of TCF/LEF within CTNNB1. In terms of processing, acetylated; acetylation impairs nuclear localization and ability to transactivate expression of target genes. Deacetylated by SIRT1. Post-translationally, phosphorylation at Ser-64 and Ser-211 by PKA increases transcriptional activity and may help delay chondrocyte maturation downstream of PTHLH/PTHrP signaling. Phosphorylation at either Ser-64 or Ser-211 is required for sumoylation, but phosphorylation is not dependent on sumoylation. Phosphorylated on tyrosine residues; tyrosine dephosphorylation by PTPN11/SHP2 blocks SOX9 phosphorylation by PKA and subsequent SUMOylation. Sumoylated; phosphorylation at either Ser-64 or Ser-211 is required for sumoylation. Sumoylation is induced by BMP signaling pathway. In terms of processing, ubiquitinated; ubiquitination leads to proteasomal degradation and is negatively regulated by DDRGK1.

The protein resides in the nucleus. In terms of biological role, transcription factor that plays a key role in chondrocytes differentiation and skeletal development. Specifically binds the 5'-ACAAAG-3' DNA motif present in enhancers and super-enhancers and promotes expression of genes important for chondrogenesis, including cartilage matrix protein-coding genes COL2A1, COL4A2, COL9A1, COL11A2 and ACAN, SOX5 and SOX6. Also binds to some promoter regions. Plays a central role in successive steps of chondrocyte differentiation. Absolutely required for precartilaginous condensation, the first step in chondrogenesis during which skeletal progenitors differentiate into prechondrocytes. Together with SOX5 and SOX6, required for overt chondrogenesis when condensed prechondrocytes differentiate into early stage chondrocytes, the second step in chondrogenesis. Later, required to direct hypertrophic maturation and block osteoblast differentiation of growth plate chondrocytes: maintains chondrocyte columnar proliferation, delays prehypertrophy and then prevents osteoblastic differentiation of chondrocytes by lowering beta-catenin (CTNNB1) signaling and RUNX2 expression. Also required for chondrocyte hypertrophy, both indirectly, by keeping the lineage fate of chondrocytes, and directly, by remaining present in upper hypertrophic cells and transactivating COL10A1 along with MEF2C. Low lipid levels are the main nutritional determinant for chondrogenic commitment of skeletal progenitor cells: when lipids levels are low, FOXO (FOXO1 and FOXO3) transcription factors promote expression of SOX9, which induces chondrogenic commitment and suppresses fatty acid oxidation. Mechanistically, helps, but is not required, to remove epigenetic signatures of transcriptional repression and deposit active promoter and enhancer marks at chondrocyte-specific genes. Acts in cooperation with the Hedgehog pathway-dependent GLI (GLI1 and GLI3) transcription factors. In addition to cartilage development, also acts as a regulator of proliferation and differentiation in epithelial stem/progenitor cells: involved in the lung epithelium during branching morphogenesis, by balancing proliferation and differentiation and regulating the extracellular matrix. Controls epithelial branching during kidney development. This is Transcription factor SOX-9 (SOX9) from Callithrix jacchus (White-tufted-ear marmoset).